Here is a 351-residue protein sequence, read N- to C-terminus: MAKIAVFFGGSSTEHSISILTGCFICKTLHTMGHSVKPILLTKDGGWVVPSEYRMSIPFEVSNSPDLFQEEFQKRYGVSRTNQIFSLDADIVFLGLHGGQGEDGTIQGFLEILGIPYTGSGVLASAIAMDKTRANQIFLQSGQKVAPFFEIDKLEYLNSTDAVITKLETLGFPQFLKPVEGGSSVSVYKITNREQLKEKLALIFESDSKVMSQSFLTGIEVSCGVLERYRDGKFKKIALPATEIVPGGEFFDFESKYKQGGSHEITPARISEQEMKRVQELAIAAHRSLGCSGYSRTDFIIVNGEPHILETNTLPGMTETSLIPQQAKAAGISMEEVFSDLIEIGLKRSLY.

One can recognise an ATP-grasp domain in the interval asparagine 135–glutamate 343. ATP is bound at residue leucine 167–serine 222. Mg(2+)-binding residues include aspartate 298, glutamate 310, and asparagine 312.

This sequence belongs to the D-alanine--D-alanine ligase family. It depends on Mg(2+) as a cofactor. Requires Mn(2+) as cofactor.

It localises to the cytoplasm. The enzyme catalyses 2 D-alanine + ATP = D-alanyl-D-alanine + ADP + phosphate + H(+). It functions in the pathway cell wall biogenesis; peptidoglycan biosynthesis. In terms of biological role, cell wall formation. This chain is D-alanine--D-alanine ligase, found in Leptospira interrogans serogroup Icterohaemorrhagiae serovar Lai (strain 56601).